We begin with the raw amino-acid sequence, 72 residues long: U-poneritoxin(01)-Om7a (72 aa).

An N-terminal signal peptide occupies residues 1–27 (MKPSGLTFAFLVVFMMAIMYNSVQVTA). Residues 28–45 (DADADAEAEALANALAEA) constitute a propeptide that is removed on maturation.

Belongs to the formicidae venom precursor-01 superfamily. As to expression, expressed by the venom gland.

Its subcellular location is the secreted. Its function is as follows. Peptide with unknown function that does not resemble any other pilosulin-like peptide and appears to have a coiled coil structure. The sequence is that of U-poneritoxin(01)-Om7a from Odontomachus monticola (Trap-jaw ant).